Consider the following 339-residue polypeptide: Serpentine receptor class gamma-7 (339 aa).

7 helical membrane passes run 30 to 50 (YWIQCLWLIPTLFLLVWIIIT), 65 to 85 (WILTADCVVSIILILLDLFVV), 98 to 118 (FSTIFINYPIISDIYFPIYNY), 152 to 172 (IPLFLTIICILPILVVWNTVI), 200 to 220 (LHLTFIFVSISFILISSLLLM), 239 to 259 (SIFIIVAFFFQAAFQSFYAFF), and 268 to 288 (FLVDFQFIIYDVMTVGYPLIF). A disordered region spans residues 319 to 339 (PFNNTMPRQESPSPNYDSILA).

It belongs to the nematode receptor-like protein srg family.

It is found in the membrane. The protein is Serpentine receptor class gamma-7 (srg-7) of Caenorhabditis elegans.